Reading from the N-terminus, the 200-residue chain is Large ribosomal subunit protein uL22c (200 aa).

Belongs to the universal ribosomal protein uL22 family. In terms of assembly, part of the 50S ribosomal subunit.

Its subcellular location is the plastid. It is found in the chloroplast. In terms of biological role, this protein binds specifically to 23S rRNA. Its function is as follows. The globular domain of the protein is located near the polypeptide exit tunnel on the outside of the subunit, while an extended beta-hairpin is found that lines the wall of the exit tunnel in the center of the 70S ribosome. The protein is Large ribosomal subunit protein uL22c (rpl22) of Medicago sativa (Alfalfa).